The sequence spans 815 residues: uncharacterized protein (815 aa).

The N-terminal stretch at 1 to 21 is a signal peptide; sequence MNIYRLSFVSCLVMAMPCAMA. The cysteines at positions 795 and 814 are disulfide-linked.

Belongs to the fimbrial export usher family.

The protein localises to the cell outer membrane. Functionally, could be involved in the export and assembly of the putative YbgD fimbrial subunit across the outer membrane. This is an uncharacterized protein from Escherichia coli (strain K12).